The sequence spans 140 residues: Holo-[acyl-carrier-protein] synthase (140 aa).

Residues Asp-8 and Glu-62 each contribute to the Mg(2+) site.

It belongs to the P-Pant transferase superfamily. AcpS family. The cofactor is Mg(2+).

Its subcellular location is the cytoplasm. The enzyme catalyses apo-[ACP] + CoA = holo-[ACP] + adenosine 3',5'-bisphosphate + H(+). Transfers the 4'-phosphopantetheine moiety from coenzyme A to a Ser of acyl-carrier-protein. This is Holo-[acyl-carrier-protein] synthase from Cupriavidus necator (strain ATCC 17699 / DSM 428 / KCTC 22496 / NCIMB 10442 / H16 / Stanier 337) (Ralstonia eutropha).